Here is a 389-residue protein sequence, read N- to C-terminus: Putative F-box/kelch-repeat protein At4g35120 (389 aa).

One can recognise an F-box domain in the interval 24–70; the sequence is SMSISSLPDEIVLSFLALISKSYYRSLSLVSKSFYSLLSSTEIYAAR. Kelch repeat units follow at residues 128-174, 176-225, and 227-273; these read EIYK…FLDG, IYVI…AVSG, and RLYV…MKPI.

In Arabidopsis thaliana (Mouse-ear cress), this protein is Putative F-box/kelch-repeat protein At4g35120.